Reading from the N-terminus, the 448-residue chain is Tubulin beta-1 chain (448 aa).

The GTP site is built by Gln11, Glu69, Ser138, Gly142, Thr143, Gly144, Asn204, and Asn226. Glu69 provides a ligand contact to Mg(2+). A disordered region spans residues 427 to 448; it reads DATADEEGDLQEGESEYIEQEE. A compositionally biased stretch (acidic residues) spans 429–448; sequence TADEEGDLQEGESEYIEQEE.

It belongs to the tubulin family. In terms of assembly, dimer of alpha and beta chains. A typical microtubule is a hollow water-filled tube with an outer diameter of 25 nm and an inner diameter of 15 nM. Alpha-beta heterodimers associate head-to-tail to form protofilaments running lengthwise along the microtubule wall with the beta-tubulin subunit facing the microtubule plus end conferring a structural polarity. Microtubules usually have 13 protofilaments but different protofilament numbers can be found in some organisms and specialized cells. Mg(2+) serves as cofactor.

It localises to the cytoplasm. Its subcellular location is the cytoskeleton. In terms of biological role, tubulin is the major constituent of microtubules, a cylinder consisting of laterally associated linear protofilaments composed of alpha- and beta-tubulin heterodimers. Microtubules grow by the addition of GTP-tubulin dimers to the microtubule end, where a stabilizing cap forms. Below the cap, tubulin dimers are in GDP-bound state, owing to GTPase activity of alpha-tubulin. This is Tubulin beta-1 chain from Brugia pahangi (Filarial nematode worm).